Consider the following 297-residue polypeptide: Carboxysome assembly protein CcmO (297 aa).

A disordered region spans residues 1–29 (MPTSPTMTSVPIARSPRPSYQQINQHQPS). Polar residues predominate over residues 18-29 (PSYQQINQHQPS). BMC domains are found at residues 32–116 (ALGL…AVFP) and 138–222 (SIGL…HTLP).

This sequence belongs to the bacterial microcompartments protein family. In terms of assembly, homooligomerizes, possibly as a trimer, interacts with CcmK in the carboxysome.

The protein resides in the carboxysome. Its function is as follows. Required for formation of the carboxysome, a polyhedral inclusion where RuBisCO (ribulose bisphosphate carboxylase, rbcL-rbcS) is sequestered. Required for recruitment of major shell protein CcmK2 to the pre-carboxysome. Suggested to be a carboxysome shell protein. This is Carboxysome assembly protein CcmO from Synechocystis sp. (strain ATCC 27184 / PCC 6803 / Kazusa).